A 611-amino-acid polypeptide reads, in one-letter code: Dehydrogenase pkfF (611 aa).

The N-terminal stretch at 1 to 19 (MRHTALLPLVSSFIVPALA) is a signal peptide. 2 N-linked (GlcNAc...) asparagine glycosylation sites follow: asparagine 28 and asparagine 38. FAD is bound by residues 50–51 (TS), 71–72 (EA), and 137–140 (HYMV). Residues asparagine 180, asparagine 187, asparagine 240, asparagine 272, asparagine 409, and asparagine 471 are each glycosylated (N-linked (GlcNAc...) asparagine). Catalysis depends on histidine 547, which acts as the Proton acceptor. FAD is bound by residues alanine 581 and 592–593 (PQ).

Belongs to the GMC oxidoreductase family. Requires FAD as cofactor.

The protein operates within secondary metabolite biosynthesis. Its function is as follows. Dehydrogenase; part of the gene cluster that mediates the biosynthesis of aspernidine A, a prenylated isoindolinone. The starting point of the biosynthesis of aspernidin A is the production of orsellinaldehyde by the non-reducing polyketide synthase pkfA. Hydroxylation, methylation of one of the phenol groups, and prenylation, presumably catalyzed by the prenyltransferase pkfE, would be needed to yield aspernidine D. Subsequently, the cytochrome P450 monooxygenase pkfB is responsible for hydroxylation of aspernidine D to yield aspernidine E. The dehydrogenase pkfF may be responsible for further oxidation of aspernidine E to form a dialdehyde intermediate which is further transformed in a series of steps, some of which are enzyme-mediated, to generate aspernidine A. The possibility that additional enzymes outside of the cluster are involved in aspernidine A biosynthesis cannot be excluded. The protein is Dehydrogenase pkfF of Emericella nidulans (strain FGSC A4 / ATCC 38163 / CBS 112.46 / NRRL 194 / M139) (Aspergillus nidulans).